The primary structure comprises 922 residues: Protein translocase subunit SecA (922 aa).

Residues glutamine 87, 105–109, and aspartate 516 contribute to the ATP site; that span reads GEGKT. The disordered stretch occupies residues 867–912; that stretch reads YTAPTETGEPETLPDPRTAGAGGDGLNLPEGVRIGRNDPCPCGSGK. 4 residues coordinate Zn(2+): cysteine 906, cysteine 908, cysteine 917, and histidine 918.

This sequence belongs to the SecA family. In terms of assembly, monomer and homodimer. Part of the essential Sec protein translocation apparatus which comprises SecA, SecYEG and auxiliary proteins SecDF-YajC and YidC. It depends on Zn(2+) as a cofactor.

Its subcellular location is the cell inner membrane. It localises to the cytoplasm. The enzyme catalyses ATP + H2O + cellular proteinSide 1 = ADP + phosphate + cellular proteinSide 2.. Functionally, part of the Sec protein translocase complex. Interacts with the SecYEG preprotein conducting channel. Has a central role in coupling the hydrolysis of ATP to the transfer of proteins into and across the cell membrane, serving both as a receptor for the preprotein-SecB complex and as an ATP-driven molecular motor driving the stepwise translocation of polypeptide chains across the membrane. The sequence is that of Protein translocase subunit SecA from Paracidovorax citrulli (strain AAC00-1) (Acidovorax citrulli).